The primary structure comprises 817 residues: Probable beta-glucosidase G (817 aa).

The N-terminal stretch at 1 to 20 (MANIAHLIVSGLLAATVAHG) is a signal peptide. N-linked (GlcNAc...) asparagine glycosylation is found at Asn-40, Asn-58, Asn-229, and Asn-276. Asp-304 is a catalytic residue. Asn-343, Asn-350, Asn-402, Asn-507, Asn-563, Asn-584, Asn-623, Asn-662, Asn-679, and Asn-715 each carry an N-linked (GlcNAc...) asparagine glycan.

It belongs to the glycosyl hydrolase 3 family.

The protein resides in the secreted. It carries out the reaction Hydrolysis of terminal, non-reducing beta-D-glucosyl residues with release of beta-D-glucose.. It functions in the pathway glycan metabolism; cellulose degradation. Its function is as follows. Beta-glucosidases are one of a number of cellulolytic enzymes involved in the degradation of cellulosic biomass. Catalyzes the last step releasing glucose from the inhibitory cellobiose. The chain is Probable beta-glucosidase G (bglG) from Aspergillus terreus (strain NIH 2624 / FGSC A1156).